Consider the following 336-residue polypeptide: Calcium uniporter regulatory subunit MCUb, mitochondrial (336 aa).

The N-terminal 35 residues, M1–L35, are a transit peptide targeting the mitochondrion. The stretch at E179 to E210 forms a coiled coil. A run of 2 helical transmembrane segments spans residues L220 to W240 and P250 to T270. Positions F297–L323 form a coiled coil.

The protein belongs to the MCU (TC 1.A.77) family. As to quaternary structure, homooligomer. Associates with the uniplex complex, composed of MCU, MICU1, MICU2 and EMRE/SMDT1, inhibiting its activity.

The protein localises to the mitochondrion inner membrane. Negative regulator of the mitochondrial calcium uniporter (MCU), a channel that mediates calcium uptake into the mitochondrial matrix. MCUB is required to limit mitochondrial calcium overload during stress. Acts as a dominant-negative regulator that displaces MCU from the functional uniplex complex and thereby decreases the association of calcium sensors MICU1 and MICU2, preventing channel gating. Mitochondrial calcium homeostasis plays key roles in mitochondrial metabolism. Acts as an important regulator of mitochondrial metabolism in response to stress in muscle cells: induced in response to fasting, leading to restrict mitochondrial calcium uptake, resulting in reprogramming of mitochondria toward fatty acid oxidation preference. Acts as a regulator of macrophage polarization during skeletal muscle regeneration: inhibition of mitochondrial calcium uptake drives differentiation of macrophages with anti-inflammatory profile, promoting the differentiation and fusion of satellite cells. In Homo sapiens (Human), this protein is Calcium uniporter regulatory subunit MCUb, mitochondrial.